A 361-amino-acid polypeptide reads, in one-letter code: Molybdenum import ATP-binding protein ModC (361 aa).

The region spanning 1–228 is the ABC transporter domain; the sequence is MLNINIEKQF…EQMRPWVPLQ (228 aa). Position 31 to 38 (31 to 38) interacts with ATP; that stretch reads GRSGAGKT. The Mop domain occupies 289-356; that stretch reads GSSIRNLLRG…IKGVTMTQMD (68 aa).

This sequence belongs to the ABC transporter superfamily. Molybdate importer (TC 3.A.1.8) family. The complex is composed of two ATP-binding proteins (ModC), two transmembrane proteins (ModB) and a solute-binding protein (ModA).

Its subcellular location is the cell inner membrane. It carries out the reaction molybdate(out) + ATP + H2O = molybdate(in) + ADP + phosphate + H(+). Part of the ABC transporter complex ModABC involved in molybdenum import. Responsible for energy coupling to the transport system. This is Molybdenum import ATP-binding protein ModC from Shewanella sp. (strain MR-4).